The primary structure comprises 685 residues: Translation initiation factor IF-2 (685 aa).

Residues lysine 185–lysine 354 enclose the tr-type G domain. Residues glycine 194 to threonine 201 form a G1 region. GTP is bound at residue glycine 194–threonine 201. The interval glycine 219–histidine 223 is G2. A G3 region spans residues aspartate 240–glycine 243. GTP is bound by residues aspartate 240–histidine 244 and asparagine 294–aspartate 297. Residues asparagine 294 to aspartate 297 are G4. Residues serine 330–histidine 332 form a G5 region.

It belongs to the TRAFAC class translation factor GTPase superfamily. Classic translation factor GTPase family. IF-2 subfamily.

It localises to the cytoplasm. One of the essential components for the initiation of protein synthesis. Protects formylmethionyl-tRNA from spontaneous hydrolysis and promotes its binding to the 30S ribosomal subunits. Also involved in the hydrolysis of GTP during the formation of the 70S ribosomal complex. The polypeptide is Translation initiation factor IF-2 (Clostridium tetani (strain Massachusetts / E88)).